Consider the following 296-residue polypeptide: Putative peptide transport system permease protein BRA1093/BS1330_II1085 (296 aa).

A run of 6 helical transmembrane segments spans residues 35–55 (IGLV…WITN), 97–117 (LWIG…IGIA), 131–151 (VMDA…SAAL), 205–225 (ILPN…AYAI), 229–249 (ATLS…GSIV), and 260–280 (WWIM…INLI). The 185-residue stretch at 97 to 281 (LWIGLTVAVL…ISALAINLIG (185 aa)) folds into the ABC transmembrane type-1 domain.

This sequence belongs to the binding-protein-dependent transport system permease family. The complex is composed of two ATP-binding proteins (BRA1094), two transmembrane proteins (BRA1092 and BRA1093) and a solute-binding protein (BRA1090).

The protein localises to the cell inner membrane. Functionally, probably part of an ABC transporter complex that could be involved in peptide import. Probably responsible for the translocation of the substrate across the membrane. This is Putative peptide transport system permease protein BRA1093/BS1330_II1085 from Brucella suis biovar 1 (strain 1330).